The sequence spans 242 residues: Glucosamine-6-phosphate deaminase (242 aa).

D67 (proton acceptor; for enolization step) is an active-site residue. N136 functions as the For ring-opening step in the catalytic mechanism. H138 acts as the Proton acceptor; for ring-opening step in catalysis. The active-site For ring-opening step is E143.

This sequence belongs to the glucosamine/galactosamine-6-phosphate isomerase family. NagB subfamily.

It carries out the reaction alpha-D-glucosamine 6-phosphate + H2O = beta-D-fructose 6-phosphate + NH4(+). Its pathway is amino-sugar metabolism; N-acetylneuraminate degradation; D-fructose 6-phosphate from N-acetylneuraminate: step 5/5. Functionally, catalyzes the reversible isomerization-deamination of glucosamine 6-phosphate (GlcN6P) to form fructose 6-phosphate (Fru6P) and ammonium ion. The sequence is that of Glucosamine-6-phosphate deaminase from Clostridium perfringens (strain SM101 / Type A).